A 1023-amino-acid chain; its full sequence is Sodium/potassium-transporting ATPase subunit alpha-1 (1023 aa).

The propeptide occupies 1–5 (MGKGV). Over residues 1-11 (MGKGVGRDKYE) the composition is skewed to basic and acidic residues. The disordered stretch occupies residues 1-39 (MGKGVGRDKYEPAAVSEHGDKKGKKAKKERDMDELKKEV). Residues 6-96 (GRDKYEPAAV…PEWVKFCRQL (91 aa)) lie on the Cytoplasmic side of the membrane. Lys-9 is modified (N6-acetyllysine). Tyr-10 is subject to Phosphotyrosine. A Phosphoserine modification is found at Ser-16. Lys-21 bears the N6-acetyllysine mark. Positions 28–39 (KERDMDELKKEV) are enriched in basic and acidic residues. Phosphoserine is present on residues Ser-40 and Ser-47. Positions 82–84 (PPP) are phosphoinositide-3 kinase binding. Residues 97–117 (FGGFSMLLWIGAILCFLAYGI) form a helical membrane-spanning segment. Topologically, residues 118 to 129 (RSATEEEPPNDD) are extracellular. The helical transmembrane segment at 130 to 150 (LYLGVVLSAVVIITGCFSYYQ) threads the bilayer. Over 151-291 (EAKSSKIMES…TPIAEEIEHF (141 aa)) the chain is Cytoplasmic. The disordered stretch occupies residues 216-235 (SSLTGESEPQTRSPDFTNEN). At Ser-228 the chain carries Phosphoserine. Tyr-260 is modified (phosphotyrosine). The helical transmembrane segment at 292 to 312 (IHLITGVAVFLGVSFFILSLI) threads the bilayer. The Extracellular segment spans residues 313 to 319 (LEYTWLE). Residues 320–340 (AVIFLIGIIVANVPEGLLATV) traverse the membrane as a helical segment. Over 341-775 (TVCLTLTAKR…RLIFDNLKKS (435 aa)) the chain is Cytoplasmic. The active-site 4-aspartylphosphate intermediate is Asp-376. Residues Ser-452 and Ser-484 each carry the phosphoserine modification. Lys-487 serves as a coordination point for ATP. Tyr-542 is modified (phosphotyrosine). Positions 596–717 (RAAVPDAVGK…QGAIVAVTGD (122 aa)) are mediates interaction with SCN7A. Position 661 is an N6-succinyllysine (Lys-661). A phosphoserine mark is found at Ser-668 and Ser-675. 2 residues coordinate Mg(2+): Asp-717 and Asp-721. Residues 776-798 (IAYTLTSNIPEITPFLIFIIANI) traverse the membrane as a helical segment. The Extracellular portion of the chain corresponds to 799-801 (PLP). The chain crosses the membrane as a helical span at residues 802–824 (LGTVTILCIDLGTDMVPAISLAY). Residues 825–849 (EQAESDIMKRQPRNPKTDKLVNERL) lie on the Cytoplasmic side of the membrane. A helical transmembrane segment spans residues 850-872 (ISMAYGQIGMIQALGGFFTYFVI). Residues 873–915 (LAENGFLPFHLLGIRETWDDRWVNDVEDSYGQQWTYEQRKIVE) are Extracellular-facing. A helical membrane pass occupies residues 916–936 (FTCHTAFFVSIVVVQWADLVI). Topologically, residues 937-952 (CKTRRNSVFQQGMKNK) are cytoplasmic. Ser-943 carries the post-translational modification Phosphoserine; by PKA. Residues 953-973 (ILIFGLFEETALAAFLSYCPG) traverse the membrane as a helical segment. The Extracellular segment spans residues 974-979 (MGAALR). The chain crosses the membrane as a helical span at residues 980–1000 (MYPLKPTWWFCAFPYSLLIFV). Residues 1001–1023 (YDEVRKLIIRRRPGGWVEKETYY) are Cytoplasmic-facing.

The protein belongs to the cation transport ATPase (P-type) (TC 3.A.3) family. Type IIC subfamily. The sodium/potassium-transporting ATPase is composed of a catalytic alpha subunit, an auxiliary non-catalytic beta subunit and an additional regulatory subunit. Interacts with regulatory subunit FXYD1. Interacts with regulatory subunit FXYD3. Interacts with SIK1. Interacts with SLC35G1 and STIM1. Interacts with CLN3; this interaction regulates the sodium/potassium-transporting ATPase complex localization at the plasma membrane. Interacts with SCN7A; activates ATP1A1 P-type sodium:potassium-exchanging transporter activity which indirectly signals to nearby neurons to regulate sodium homeostasis. Phosphorylation on Tyr-10 modulates pumping activity. Phosphorylation of Ser-943 by PKA modulates the response of ATP1A1 to PKC. Dephosphorylation by protein phosphatase 2A (PP2A) following increases in intracellular sodium, leading to increase catalytic activity.

The protein localises to the cell membrane. It localises to the basolateral cell membrane. The protein resides in the sarcolemma. It is found in the cell projection. Its subcellular location is the axon. The protein localises to the melanosome. It catalyses the reaction K(+)(out) + Na(+)(in) + ATP + H2O = K(+)(in) + Na(+)(out) + ADP + phosphate + H(+). Its function is as follows. This is the catalytic component of the active enzyme, which catalyzes the hydrolysis of ATP coupled with the exchange of sodium and potassium ions across the plasma membrane. This action creates the electrochemical gradient of sodium and potassium ions, providing the energy for active transport of various nutrients. Could also be part of an osmosensory signaling pathway that senses body-fluid sodium levels and controls salt intake behavior as well as voluntary water intake to regulate sodium homeostasis. This is Sodium/potassium-transporting ATPase subunit alpha-1 (Atp1a1) from Mus musculus (Mouse).